We begin with the raw amino-acid sequence, 976 residues long: Mast/stem cell growth factor receptor kita (976 aa).

A signal peptide spans 1–21 (MEYHCVLFTVLLQLIIQPGRS). Residues 22-515 (RPTITPEGPR…NTVPHELFTP (494 aa)) are Extracellular-facing. 5 Ig-like C2-type domains span residues 23 to 105 (PTIT…VYVK), 100 to 199 (IYVY…LTVR), 206 to 301 (PPIT…VWVN), 308 to 402 (INIT…FEVH), and 399 to 504 (FEVH…FSIS). 2 N-linked (GlcNAc...) asparagine glycosylation sites follow: N39 and N47. 4 disulfide bridges follow: C44-C89, C131-C180, C146-C177, and C228-C285. Residues N282, N309, N315, N352, N449, and N477 are each glycosylated (N-linked (GlcNAc...) asparagine). C422 and C488 are disulfide-bonded. A helical transmembrane segment spans residues 516–536 (LLIGFVAAAVILVLILIVLTY). Residues 537–976 (KYMQKPKYQI…DRSSPSHPVV (440 aa)) lie on the Cytoplasmic side of the membrane. Mg(2+) is bound at residue Y559. 2 positions are modified to phosphotyrosine; by autocatalysis: Y559 and Y561. A Protein kinase domain is found at 580-922 (LRFGKTLGSG…ISDSTKHIYL (343 aa)). ATP is bound by residues 587–594 (GSGAFGKV), K614, and 662–668 (EYCCFGD). Phosphotyrosine; by autocatalysis occurs at positions 691 and 707. The Proton acceptor role is filled by D777. Residue R781 coordinates ATP. Mg(2+)-binding residues include N782 and D795. Y808 and Y921 each carry phosphotyrosine; by autocatalysis. Positions 929-976 (PAAPGPREESSSHVHRLNSVGSHSTATQPLLSSNDVFLDRSSPSHPVV) are disordered. Residues 947-976 (SVGSHSTATQPLLSSNDVFLDRSSPSHPVV) are compositionally biased toward polar residues.

This sequence belongs to the protein kinase superfamily. Tyr protein kinase family. CSF-1/PDGF receptor subfamily. Post-translationally, ubiquitinated. Rapidly ubiquitinated after autophosphorylation induced by kitlg/scf binding, leading to internalization and degradation. Autophosphorylated on tyrosine residues. Phosphorylated tyrosine residues are important for interaction with specific binding partners. In terms of tissue distribution, expressed in cells of the neural crest-melanocyte lineage. In the embryo, also expressed in mesodermal cells that give rise to hematopoietic precursors, notochord, neural crest-derived cells of the branchial arches, pineal gland, retina and mechanoreceptive sensory cells of lateral line neuromasts. Not detected in primordial germ cells or larval gut.

It is found in the cell membrane. It carries out the reaction L-tyrosyl-[protein] + ATP = O-phospho-L-tyrosyl-[protein] + ADP + H(+). Functionally, tyrosine-protein kinase that acts as a cell-surface receptor for the cytokine kitlg/scf and plays a role in the regulation of cell survival and proliferation, hematopoiesis, stem cell maintenance, gametogenesis, and in mast cell development, migration and function. Required for the migration of cells in the melanocyte lineage and the survival of embryonic melanocytes. Required for the differentiation of some, but not all, melanocytes. Not essential for hematopoiesis or primordial germ cell development. This is Mast/stem cell growth factor receptor kita (kita) from Danio rerio (Zebrafish).